The chain runs to 118 residues: Late cornified envelope protein 1B (118 aa).

A disordered region spans residues 87 to 118 (CHRPQSSGCCSQPSGGSSCCGGGSGQHSGGCC). A compositionally biased stretch (low complexity) spans 90–103 (PQSSGCCSQPSGGS). Gly residues predominate over residues 104–118 (SCCGGGSGQHSGGCC).

The protein belongs to the LCE family. Interacts with CYSRT1; the interaction is direct. In terms of tissue distribution, skin-specific. Expression was readily detected in adult trunk skin, adult arm skin, fetal skin, penal skin, vulva, esophagus and tongue. Not expressed in the cervix, rectum, lung, colon, or placenta.

Its function is as follows. Precursors of the cornified envelope of the stratum corneum. In Homo sapiens (Human), this protein is Late cornified envelope protein 1B (LCE1B).